Here is a 494-residue protein sequence, read N- to C-terminus: Guanosine-5'-triphosphate,3'-diphosphate pyrophosphatase (494 aa).

This sequence belongs to the GppA/Ppx family. GppA subfamily.

The catalysed reaction is guanosine 3'-diphosphate 5'-triphosphate + H2O = guanosine 3',5'-bis(diphosphate) + phosphate + H(+). Its pathway is purine metabolism; ppGpp biosynthesis; ppGpp from GTP: step 2/2. Catalyzes the conversion of pppGpp to ppGpp. Guanosine pentaphosphate (pppGpp) is a cytoplasmic signaling molecule which together with ppGpp controls the 'stringent response', an adaptive process that allows bacteria to respond to amino acid starvation, resulting in the coordinated regulation of numerous cellular activities. The sequence is that of Guanosine-5'-triphosphate,3'-diphosphate pyrophosphatase from Escherichia coli O127:H6 (strain E2348/69 / EPEC).